Here is a 377-residue protein sequence, read N- to C-terminus: MSHNPIRPWRNIDRRKSRQIMVGNVPVGGDAPITVQTMTNTLTTDASATIKQVIAAAEAGADIVRVSVPDADSARAMHEICRESPVPIVADIHFHYKRGIEAAEAGAACLRINPGNIGDAARVKEVVKAARDHNCSIRIGVNAGSLEKHLLEKYGEPCPDAMVESGMDHIKLLEDNDFHEFKISMKASDIFMTAAAYQQLADQTDAPFHMGITEAGGFVGGTVKSAIGLGNLLWAGIGDTMRVSLSADPVEEVKIGFEILKSLGLRHRGVNIISCPSCARQGFDVIKTVEVLEQRLEHIKTPMSLSIIGCVVNGPGEALMTDVGFTGGGAGSGMVYLAGKQSHKMSNEQMVDHIVEQVEKRAEAIEAQAKAADQAAE.

Residues Cys-275, Cys-278, Cys-310, and Glu-317 each contribute to the [4Fe-4S] cluster site.

This sequence belongs to the IspG family. [4Fe-4S] cluster serves as cofactor.

It catalyses the reaction (2E)-4-hydroxy-3-methylbut-2-enyl diphosphate + oxidized [flavodoxin] + H2O + 2 H(+) = 2-C-methyl-D-erythritol 2,4-cyclic diphosphate + reduced [flavodoxin]. It participates in isoprenoid biosynthesis; isopentenyl diphosphate biosynthesis via DXP pathway; isopentenyl diphosphate from 1-deoxy-D-xylulose 5-phosphate: step 5/6. Functionally, converts 2C-methyl-D-erythritol 2,4-cyclodiphosphate (ME-2,4cPP) into 1-hydroxy-2-methyl-2-(E)-butenyl 4-diphosphate. The chain is 4-hydroxy-3-methylbut-2-en-1-yl diphosphate synthase (flavodoxin) from Jannaschia sp. (strain CCS1).